We begin with the raw amino-acid sequence, 281 residues long: Pantothenate synthetase (281 aa).

30 to 37 (MGYLHEGH) contacts ATP. H37 acts as the Proton donor in catalysis. Q61 is a binding site for (R)-pantoate. Q61 is a beta-alanine binding site. Position 147–150 (147–150 (GQKD)) interacts with ATP. Q153 serves as a coordination point for (R)-pantoate. ATP contacts are provided by residues V176 and 184-187 (MSSR).

Belongs to the pantothenate synthetase family. In terms of assembly, homodimer.

Its subcellular location is the cytoplasm. It carries out the reaction (R)-pantoate + beta-alanine + ATP = (R)-pantothenate + AMP + diphosphate + H(+). Its pathway is cofactor biosynthesis; (R)-pantothenate biosynthesis; (R)-pantothenate from (R)-pantoate and beta-alanine: step 1/1. Catalyzes the condensation of pantoate with beta-alanine in an ATP-dependent reaction via a pantoyl-adenylate intermediate. The protein is Pantothenate synthetase of Caldicellulosiruptor saccharolyticus (strain ATCC 43494 / DSM 8903 / Tp8T 6331).